A 382-amino-acid chain; its full sequence is Lipid-A-disaccharide synthase (382 aa).

It belongs to the LpxB family.

It carries out the reaction 2-N,3-O-bis[(3R)-3-hydroxytetradecanoyl]-alpha-D-glucosaminyl 1-phosphate + UDP-2-N,3-O-bis[(3R)-3-hydroxytetradecanoyl]-alpha-D-glucosamine = lipid A disaccharide (E. coli) + UDP + H(+). The enzyme catalyses a lipid X + a UDP-2-N,3-O-bis[(3R)-3-hydroxyacyl]-alpha-D-glucosamine = a lipid A disaccharide + UDP + H(+). It functions in the pathway glycolipid biosynthesis; lipid IV(A) biosynthesis; lipid IV(A) from (3R)-3-hydroxytetradecanoyl-[acyl-carrier-protein] and UDP-N-acetyl-alpha-D-glucosamine: step 5/6. Condensation of UDP-2,3-diacylglucosamine and 2,3-diacylglucosamine-1-phosphate to form lipid A disaccharide, a precursor of lipid A, a phosphorylated glycolipid that anchors the lipopolysaccharide to the outer membrane of the cell. The polypeptide is Lipid-A-disaccharide synthase (Escherichia coli (strain K12 / MC4100 / BW2952)).